A 343-amino-acid chain; its full sequence is Cytoplasmic tRNA 2-thiolation protein 1 (343 aa).

Belongs to the TtcA family. CTU1/NCS6/ATPBD3 subfamily.

It is found in the cytoplasm. It functions in the pathway tRNA modification; 5-methoxycarbonylmethyl-2-thiouridine-tRNA biosynthesis. Plays a central role in 2-thiolation of mcm(5)S(2)U at tRNA wobble positions of tRNA(Lys), tRNA(Glu) and tRNA(Gln). Directly binds tRNAs and probably acts by catalyzing adenylation of tRNAs, an intermediate required for 2-thiolation. It is unclear whether it acts as a sulfurtransferase that transfers sulfur from thiocarboxylated URM1 onto the uridine of tRNAs at wobble position. This chain is Cytoplasmic tRNA 2-thiolation protein 1, found in Drosophila ananassae (Fruit fly).